The primary structure comprises 201 residues: Oxalate oxidase 1 (201 aa).

Cys-10 and Cys-26 form a disulfide bridge. A Cupin type-1 domain is found at Ser-40–Glu-191. Residue Asn-47 is glycosylated (N-linked (GlcNAc...) asparagine). Residues Asn-75 and Asn-85 each contribute to the oxalate site. Residues His-88, His-90, Glu-95, and His-137 each contribute to the Mn(2+) site. Oxalate is bound by residues His-90 and Glu-95.

It belongs to the germin family. As to quaternary structure, homo hexamer; a trimer of dimers. Glycosylated. A form called G contains antennary GlcNAc residues, whereas a form called G' lacks antennary GlcNAc residues in its otherwise identical glycans.

The protein localises to the secreted. The protein resides in the extracellular space. It localises to the apoplast. Its subcellular location is the cell wall. The enzyme catalyses oxalate + O2 + 2 H(+) = H2O2 + 2 CO2. Its function is as follows. Releases hydrogen peroxide in the apoplast which may be important for cross-linking reactions in the cell wall biochemistry. May play an important role in several aspects of plant growth and defense mechanisms. In Hordeum vulgare (Barley), this protein is Oxalate oxidase 1.